We begin with the raw amino-acid sequence, 400 residues long: tRNA(Ile)-lysidine synthase (400 aa).

25–30 (SGGVDS) serves as a coordination point for ATP.

The protein belongs to the tRNA(Ile)-lysidine synthase family.

It is found in the cytoplasm. The enzyme catalyses cytidine(34) in tRNA(Ile2) + L-lysine + ATP = lysidine(34) in tRNA(Ile2) + AMP + diphosphate + H(+). Its function is as follows. Ligates lysine onto the cytidine present at position 34 of the AUA codon-specific tRNA(Ile) that contains the anticodon CAU, in an ATP-dependent manner. Cytidine is converted to lysidine, thus changing the amino acid specificity of the tRNA from methionine to isoleucine. The polypeptide is tRNA(Ile)-lysidine synthase (Francisella philomiragia subsp. philomiragia (strain ATCC 25017 / CCUG 19701 / FSC 153 / O#319-036)).